The following is a 243-amino-acid chain: UDP-N-acetylglucosamine 1-carboxyvinyltransferase (243 aa).

D113 and I135 together coordinate UDP-N-acetyl-alpha-D-glucosamine.

It belongs to the EPSP synthase family. MurA subfamily.

The protein localises to the cytoplasm. It carries out the reaction phosphoenolpyruvate + UDP-N-acetyl-alpha-D-glucosamine = UDP-N-acetyl-3-O-(1-carboxyvinyl)-alpha-D-glucosamine + phosphate. It participates in cell wall biogenesis; peptidoglycan biosynthesis. Its function is as follows. Cell wall formation. Adds enolpyruvyl to UDP-N-acetylglucosamine. The sequence is that of UDP-N-acetylglucosamine 1-carboxyvinyltransferase (murA) from Desulfofundulus thermocisternus (Desulfotomaculum thermocisternum).